Reading from the N-terminus, the 165-residue chain is uncharacterized protein (165 aa).

The tract at residues 53 to 123 (CSEKTGSAPN…PAPSSGRQGG (71 aa)) is disordered. Low complexity predominate over residues 58 to 71 (GSAPNPGSSAPAPA).

This is an uncharacterized protein from Treponema pallidum (strain Nichols).